We begin with the raw amino-acid sequence, 438 residues long: DEAD-box ATP-dependent RNA helicase 58, chloroplastic (438 aa).

The N-terminal 44 residues, methionine 1–cysteine 44, are a transit peptide targeting the chloroplast. Positions arginine 41–glutamate 69 match the Q motif motif. Positions leucine 72–threonine 245 constitute a Helicase ATP-binding domain. Alanine 85–threonine 92 contacts ATP. The DEAD box motif lies at aspartate 190–aspartate 193. In terms of domain architecture, Helicase C-terminal spans arginine 274 to phenylalanine 436.

Belongs to the DEAD box helicase family.

It localises to the plastid. It is found in the chloroplast. The catalysed reaction is ATP + H2O = ADP + phosphate + H(+). This Oryza sativa subsp. japonica (Rice) protein is DEAD-box ATP-dependent RNA helicase 58, chloroplastic.